The chain runs to 219 residues: Deoxyribose-phosphate aldolase 1 (219 aa).

Aspartate 87 (proton donor/acceptor) is an active-site residue. Lysine 149 acts as the Schiff-base intermediate with acetaldehyde in catalysis. Lysine 178 acts as the Proton donor/acceptor in catalysis.

This sequence belongs to the DeoC/FbaB aldolase family. DeoC type 1 subfamily.

It is found in the cytoplasm. The catalysed reaction is 2-deoxy-D-ribose 5-phosphate = D-glyceraldehyde 3-phosphate + acetaldehyde. The protein operates within carbohydrate degradation; 2-deoxy-D-ribose 1-phosphate degradation; D-glyceraldehyde 3-phosphate and acetaldehyde from 2-deoxy-alpha-D-ribose 1-phosphate: step 2/2. In terms of biological role, catalyzes a reversible aldol reaction between acetaldehyde and D-glyceraldehyde 3-phosphate to generate 2-deoxy-D-ribose 5-phosphate. This Vibrio vulnificus (strain YJ016) protein is Deoxyribose-phosphate aldolase 1.